Here is a 208-residue protein sequence, read N- to C-terminus: Adenylate kinase (208 aa).

10 to 15 (GAGKGT) provides a ligand contact to ATP. Positions 30–59 (STGEMLRAAVAAGTPVGLKAKDVMASGGLV) are NMP. AMP contacts are provided by residues Thr31, Arg36, 57 to 59 (GLV), 85 to 88 (GFPR), and Gln92. The interval 126–142 (SRVAEMTARGEQVRADD) is LID. Arg127 contacts ATP. AMP contacts are provided by Arg139 and Arg150. An ATP-binding site is contributed by Met178.

Belongs to the adenylate kinase family. Monomer.

It localises to the cytoplasm. The enzyme catalyses AMP + ATP = 2 ADP. It participates in purine metabolism; AMP biosynthesis via salvage pathway; AMP from ADP: step 1/1. Functionally, catalyzes the reversible transfer of the terminal phosphate group between ATP and AMP. Plays an important role in cellular energy homeostasis and in adenine nucleotide metabolism. This chain is Adenylate kinase, found in Nitrobacter hamburgensis (strain DSM 10229 / NCIMB 13809 / X14).